A 93-amino-acid chain; its full sequence is Large ribosomal subunit protein uL23cz/uL23cy (93 aa).

Belongs to the universal ribosomal protein uL23 family. In terms of assembly, part of the 50S ribosomal subunit.

It localises to the plastid. It is found in the chloroplast. Its function is as follows. Binds to 23S rRNA. This chain is Large ribosomal subunit protein uL23cz/uL23cy (rpl23-A), found in Panax ginseng (Korean ginseng).